The following is a 449-amino-acid chain: tRNA-2-methylthio-N(6)-dimethylallyladenosine synthase (449 aa).

Residues 13–128 (RRIFIETYGC…LPHLIGTVEK (116 aa)) form the MTTase N-terminal domain. [4Fe-4S] cluster is bound by residues Cys22, Cys58, Cys92, Cys166, Cys170, and Cys173. The Radical SAM core domain occupies 152–383 (SRIKISGFIS…ITLQLKISLM (232 aa)). Positions 386-449 (KENIGKTMEI…AATLFGDPKL (64 aa)) constitute a TRAM domain.

This sequence belongs to the methylthiotransferase family. MiaB subfamily. As to quaternary structure, monomer. It depends on [4Fe-4S] cluster as a cofactor.

The protein resides in the cytoplasm. It carries out the reaction N(6)-dimethylallyladenosine(37) in tRNA + (sulfur carrier)-SH + AH2 + 2 S-adenosyl-L-methionine = 2-methylsulfanyl-N(6)-dimethylallyladenosine(37) in tRNA + (sulfur carrier)-H + 5'-deoxyadenosine + L-methionine + A + S-adenosyl-L-homocysteine + 2 H(+). Its function is as follows. Catalyzes the methylthiolation of N6-(dimethylallyl)adenosine (i(6)A), leading to the formation of 2-methylthio-N6-(dimethylallyl)adenosine (ms(2)i(6)A) at position 37 in tRNAs that read codons beginning with uridine. In Azobacteroides pseudotrichonymphae genomovar. CFP2, this protein is tRNA-2-methylthio-N(6)-dimethylallyladenosine synthase.